We begin with the raw amino-acid sequence, 229 residues long: ADP-ribosylation factor-like protein 6-interacting protein 4 (229 aa).

Basic residues predominate over residues 1–20; that stretch reads MAHVGSRKRSRSRSRSRSGR. The interval 1 to 152 is disordered; it reads MAHVGSRKRS…EDNDGPVLTD (152 aa). Positions 21 to 35 are enriched in basic and acidic residues; sequence RGSEKRSKRSSKDAS. The segment covering 66-87 has biased composition (low complexity); it reads SRSSSTSSSSSSSSSASSSSSS. A compositionally biased stretch (basic residues) spans 90 to 117; it reads RKKRAKHKEKKRKKKKKKRKKKLKKRVK. Serine 140 and serine 174 each carry phosphoserine. A Glycyl lysine isopeptide (Lys-Gly) (interchain with G-Cter in SUMO2) cross-link involves residue lysine 191.

The protein belongs to the ARL6IP4 family. In terms of assembly, interacts with ZCCHC17. Interacts with SRSF2. Interacts with ARL6. Widely expressed. Expressed at high level in testis and thymus.

The protein localises to the nucleus. It is found in the nucleolus. Its subcellular location is the nucleus speckle. Involved in modulating alternative pre-mRNA splicing with either 5' distal site activation or preferential use of 3' proximal site. The chain is ADP-ribosylation factor-like protein 6-interacting protein 4 (Arl6ip4) from Mus musculus (Mouse).